A 508-amino-acid polypeptide reads, in one-letter code: 2,3-bisphosphoglycerate-independent phosphoglycerate mutase (508 aa).

Mn(2+) is bound by residues D14 and S64. The Phosphoserine intermediate role is filled by S64. Residues H125, 155–156, R187, R193, 259–262, and K332 each bind substrate; these read RD and RADR. Mn(2+) is bound by residues D399, H403, D440, H441, and H459.

It belongs to the BPG-independent phosphoglycerate mutase family. Monomer. Mn(2+) serves as cofactor.

It carries out the reaction (2R)-2-phosphoglycerate = (2R)-3-phosphoglycerate. It participates in carbohydrate degradation; glycolysis; pyruvate from D-glyceraldehyde 3-phosphate: step 3/5. Functionally, catalyzes the interconversion of 2-phosphoglycerate and 3-phosphoglycerate. The sequence is that of 2,3-bisphosphoglycerate-independent phosphoglycerate mutase from Pseudomonas fluorescens (strain Pf0-1).